The following is a 146-amino-acid chain: Snaclec mamushigin subunit beta (146 aa).

An N-terminal signal peptide occupies residues Met-1–Ala-23. 3 cysteine pairs are disulfide-bonded: Cys-25-Cys-36, Cys-53-Cys-142, and Cys-119-Cys-134. Positions Tyr-32–Lys-143 constitute a C-type lectin domain.

As to quaternary structure, heterodimer of subunits alpha and beta; disulfide-linked. Expressed by the venom gland.

Its subcellular location is the secreted. Its function is as follows. Binds to platelet GPIbalpha (GP1BA) and enhances platelet aggregation at low-shear stress. At high-shear stress, blocks platelet aggregation in a dose-dependent manner. The polypeptide is Snaclec mamushigin subunit beta (Gloydius blomhoffii (Mamushi)).